The following is a 297-amino-acid chain: NAC domain-containing protein 72 (297 aa).

Residues 14–162 form the NAC domain; the sequence is LPPGFRFYPT…DWVLCRIYKK (149 aa). The DNA-binding element occupies 111–168; that stretch reads VGIKKALVFYAGKAPKGTKTNWIMHEYRLIEHSRSHGSSKLDDWVLCRIYKKTSGSQR. Disordered stretches follow at residues 168–195 and 259–278; these read RQAV…SQLD and GEAE…LTQS. The segment covering 266–277 has biased composition (polar residues); the sequence is VNRQQNSSGLTQ.

Expressed in leaves and in root pericycle and epidermis.

The protein resides in the nucleus. Transcription factors that bind specifically to the 5'-CATGTG-3' motif and with bipartite regions with 5'-CGTr-3' and 5'-YACG-3' as cores. Involved in the regulation of metabolic reprogramming during senescence by promoting the chloroplast protein degradation and the catabolism of lysine, phytol and free fatty acids via the induction of CV, LKR/SDH and PES1 expression. Also triggers the degradation of starch and the accumulation of mono- and disaccharides during senescence by enhancing the expression of AMY1, SFP1 and SWEET15. In Arabidopsis thaliana (Mouse-ear cress), this protein is NAC domain-containing protein 72.